The following is a 478-amino-acid chain: PRAME family member 4 (478 aa).

Residues 99–126 (RWKLQVLDLQDVCENFWMVWSEAMAHGC) form an LRR 1; degenerate repeat. Residues 181 to 205 (HLCCKKLKILGMPFRNIRSILKMVN) form an LRR 2; degenerate repeat. The LRR 3; degenerate repeat unit spans residues 206-232 (LDCIQEVEVNCKWVLPILTQFTPYLGH). Residues 233 to 268 (MRNLQKLILSHMDVSRYVSPEQKKEIVTQFTTQFLK) form an LRR 4; degenerate repeat. LRR repeat units follow at residues 269–294 (LRCLQKLYMNSVSFLEGHLDQLLSCL), 295–326 (KTSLKFLTITNCVLLESDLKHLSQCPSISQLK), 327–347 (TLDLSGIRLTNYSLVPLQILL), 351–378 (AATLEYLDLDDCGIIDSQVNAILPALSR), and 379–403 (CFELNTFSFCGNPICMATLENLLSH).

Belongs to the PRAME family.

The polypeptide is PRAME family member 4 (Homo sapiens (Human)).